The primary structure comprises 311 residues: Probable manganese-dependent inorganic pyrophosphatase (311 aa).

Residues H9, D13, D15, D75, H97, and D149 each contribute to the Mn(2+) site.

This sequence belongs to the PPase class C family. Requires Mn(2+) as cofactor.

Its subcellular location is the cytoplasm. The catalysed reaction is diphosphate + H2O = 2 phosphate + H(+). The polypeptide is Probable manganese-dependent inorganic pyrophosphatase (Lactobacillus acidophilus (strain ATCC 700396 / NCK56 / N2 / NCFM)).